A 419-amino-acid polypeptide reads, in one-letter code: Histidine--tRNA ligase (419 aa).

This sequence belongs to the class-II aminoacyl-tRNA synthetase family.

It is found in the cytoplasm. It carries out the reaction tRNA(His) + L-histidine + ATP = L-histidyl-tRNA(His) + AMP + diphosphate + H(+). The chain is Histidine--tRNA ligase from Pyrobaculum arsenaticum (strain DSM 13514 / JCM 11321 / PZ6).